Here is a 277-residue protein sequence, read N- to C-terminus: Shikimate dehydrogenase (NADP(+)) (277 aa).

Shikimate is bound by residues 14–16 (SKS) and threonine 61. Residue lysine 65 is the Proton acceptor of the active site. Aspartate 77 is an NADP(+) binding site. Shikimate contacts are provided by asparagine 86 and aspartate 102. NADP(+)-binding positions include 127–131 (GAGGA), 151–156 (NRTPDK), and methionine 215. Tyrosine 217 serves as a coordination point for shikimate. NADP(+) is bound at residue glycine 239.

The protein belongs to the shikimate dehydrogenase family. Homodimer.

The enzyme catalyses shikimate + NADP(+) = 3-dehydroshikimate + NADPH + H(+). It functions in the pathway metabolic intermediate biosynthesis; chorismate biosynthesis; chorismate from D-erythrose 4-phosphate and phosphoenolpyruvate: step 4/7. Its function is as follows. Involved in the biosynthesis of the chorismate, which leads to the biosynthesis of aromatic amino acids. Catalyzes the reversible NADPH linked reduction of 3-dehydroshikimate (DHSA) to yield shikimate (SA). This is Shikimate dehydrogenase (NADP(+)) from Nitrosomonas eutropha (strain DSM 101675 / C91 / Nm57).